The primary structure comprises 648 residues: ATP-dependent DNA helicase Q1 (648 aa).

One can recognise a Helicase ATP-binding domain in the interval 100-275; that stretch reads INVTMARKDI…QKILCVGKCL (176 aa). 113–120 is a binding site for ATP; it reads MPTGGGKS. The DEVH box motif lies at 219–222; that stretch reads DEVH. In terms of domain architecture, Helicase C-terminal spans 299–451; that stretch reads DFTEDIVKLI…EMVSYCQNVS (153 aa). Positions 453, 471, 475, and 478 each coordinate Zn(2+). Residues K514 and K522 each carry the N6-acetyllysine modification. Residue S597 is modified to Phosphoserine. Residues 601 to 648 form a disordered region; the sequence is ALSEARQVEQVDSKGEEQSSGNSQKSKSRLQPSGSKNAGAKKRKLDDA. Basic and acidic residues predominate over residues 606–617; it reads RQVEQVDSKGEE. Positions 618 to 636 are enriched in polar residues; it reads QSSGNSQKSKSRLQPSGSK. The residue at position 633 (S633) is a Phosphoserine. Residues 639-648 show a composition bias toward basic residues; that stretch reads GAKKRKLDDA.

Belongs to the helicase family. RecQ subfamily. May form homodimers or higher order oligomers. Interacts with EXO1. Interacts with MLH1. Interacts with PARP1. The cofactor is Mg(2+). It depends on Mn(2+) as a cofactor. Zn(2+) is required as a cofactor. In terms of tissue distribution, expressed in all tissues examined. Only expressed in spermatocytes. Expression increases at pachytene (17 days old) and decreases after completion of meiosis II (7 weeks old).

It is found in the nucleus. It carries out the reaction Couples ATP hydrolysis with the unwinding of duplex DNA by translocating in the 3'-5' direction.. The catalysed reaction is ATP + H2O = ADP + phosphate + H(+). It catalyses the reaction dATP + H2O = dADP + phosphate + H(+). In terms of biological role, DNA helicase that plays a role in DNA damage repair and genome stability. Exhibits a magnesium- and ATP-dependent DNA-helicase activity that unwinds single- and double-stranded DNA in a 3'-5' direction. Plays a role in restoring regressed replication forks. Required to restart stalled replication forks induced by abortive topoisomerase 1 and 2 lesions. May play a role in the repair of DNA that is damaged by ultraviolet light or other mutagens. This chain is ATP-dependent DNA helicase Q1 (Recql), found in Mus musculus (Mouse).